We begin with the raw amino-acid sequence, 166 residues long: Short form salivary protein D7R1 (166 aa).

The signal sequence occupies residues 1 to 21 (MFRKVFSVALVTCGLLVIVQA).

It belongs to the PBP/GOBP family. In terms of assembly, interacts with host coagulation factor XII (F12) (inactive and activated) (via amino acids 1-77). Interacts with host high molecular weight kininogen (KNG1) (via amino acids 402-532). In terms of tissue distribution, female salivary gland (at protein level).

The protein localises to the secreted. With respect to regulation, zn(2+) modulates binding to host coagulation factor XII (F12) and high molecular weight kininogen (KNG1). Its function is as follows. Salivary protein with anticoagulant activity that targets the intrinsic blood coagulation pathway in the host. Inhibits activation of the host plasma contact system by preventing the reciprocal activation of host coagulation factor XII (F12) and prekallikrein (KLKB1). Attenuates generation of bradykinin in host plasma. May bind and sequester different mediators involved in the host response, such as serotonin and histamine. This Anopheles stephensi (Indo-Pakistan malaria mosquito) protein is Short form salivary protein D7R1.